The primary structure comprises 374 residues: Homeobox protein knotted-1-like 13 (374 aa).

The disordered stretch occupies residues 214–242 (TGASPGEGTGATMSDGEDDQADSEANMYD). One can recognise an ELK domain in the interval 270 to 290 (ELKHELKQGYKEKLIDIREEI). Residues 291-354 (LRKRRAGKLP…NQRKRNWHSN (64 aa)) constitute a DNA-binding region (homeobox; TALE-type). The disordered stretch occupies residues 347 to 374 (RKRNWHSNPSSSTSVKTKRKSNAGDNNS).

This sequence belongs to the TALE/KNOX homeobox family. Isoforms 1 and 2 are expressed in roots, stems, shoot meristem, leaf blades, leaf sheaths and flowers. Isoform 3 is expressed in stems, shoot meristem, rachis, leaf blades and leaf sheaths.

The protein resides in the nucleus. Isoform 3 acts as a transcription activator, but isoforms 1 and 2 do not. This Oryza sativa subsp. japonica (Rice) protein is Homeobox protein knotted-1-like 13 (OSH45).